Reading from the N-terminus, the 776-residue chain is MGTVPDPLRSAKTSLIAASGKEDDLGEPQAASPRHRPALLCKNANGFSGAPAEPDLSPRAAAEALMQVCEHETTQPDMSSPGVFNEVQKAPATFNSPGNPQLPGSSQPAASAPSSAAGRDLIHTPLTMPANQHTCQSIPGDQPNAITSSMPEDSLMRSQRTSNREQPEKPSCPVGGVLSSSKDQVSCEFPSPETIQGTVQTPVTAARVVSHSSSPVGGPEGERQGAICDSEMRSCKPLTRESGCSENKQPSVTASGPQGTTSVTPQPTPLTSEPSACPPGPEKVPLPAQRQMSRFKEASTMTNQAESEIKEVPSRAWQDAEVQAVASVESRSVSTSPSILTAFLKESRAPEHFEQEQLRVICHSSGSHTLELSDSTLAPQESSQCPGIMPQVHIQAAAAESTAFQRENKLASLPGGVLKTSSINLVSSNAQHTCKEDGRLAGMTPVREESTAKKLAGTNSSSLKATAIDQISISACSQAETSYGLGKFETRPSEFAEKTTNGHKTDPDCKLSDSCGSISKADHSGSLDPTNKGDAREKKPASPQVVKEKESTGTDTSDAKTLLLNPKSQESGGTESAANPTPSPIRKNQESTLEENRQTKTATSLSLPSDPMGDSSPGSGKKTPSRSVKASPRRPSRVSEFLKEQKLNVTAAAAQVGLTPGDKKKQLGADSKLQLKQSKRVRDVVWDEQGMTWEVYGASLDAESLGIAIQNHLQRQIREHEKLIKTQNSQTRRSISSDTSSNKKLRGRQHSVFQSMLQNFRRPNCCVRPAPSSVLD.

2 disordered regions span residues 1-37 and 68-312; these read MGTV…RHRP and VCEH…IKEV. Over residues 101–118 the composition is skewed to low complexity; that stretch reads QLPGSSQPAASAPSSAAG. Composition is skewed to polar residues over residues 129 to 161 and 193 to 203; these read PANQ…SQRT and ETIQGTVQTPV. Over residues 208–217 the composition is skewed to low complexity; it reads VVSHSSSPVG. The span at 242-274 shows a compositional bias: polar residues; that stretch reads SGCSENKQPSVTASGPQGTTSVTPQPTPLTSEP. Phosphoserine occurs at positions 332 and 365. 2 disordered regions span residues 518–637 and 723–748; these read ISKA…RPSR and LIKT…LRGR. Residues 520–552 show a composition bias toward basic and acidic residues; sequence KADHSGSLDPTNKGDAREKKPASPQVVKEKEST. Residues 566–580 show a composition bias toward polar residues; that stretch reads PKSQESGGTESAANP. Low complexity predominate over residues 604–620; that stretch reads SLSLPSDPMGDSSPGSG. Over residues 725-742 the composition is skewed to polar residues; sequence KTQNSQTRRSISSDTSSN.

Its function is as follows. May be involved in neurite outgrowth. This is G protein-regulated inducer of neurite outgrowth 3 (GPRIN3) from Homo sapiens (Human).